A 1019-amino-acid chain; its full sequence is Sca1 complex protein phr (1019 aa).

4 disordered regions span residues 89–118 (IVIN…SSNF), 131–202 (AFNN…INNN), 265–287 (QQLN…NSAN), and 512–546 (STNN…TNNL). Over residues 93 to 102 (SSSSSSSSSS) the composition is skewed to low complexity. Over residues 141–155 (NRKEKEKDKDKDHQD) the composition is skewed to basic and acidic residues. The stretch at 158–188 (NINNINNINNNINNNINNNNNNNNNNNNNNN) forms a coiled coil. Residues 158 to 202 (NINNINNINNNINNNINNNNNNNNNNNNNNNMHNPTSSSPSINNN) show a composition bias toward low complexity. In terms of domain architecture, PH spans 735-836 (EIKKKGYLFK…WIKAIKFNCF (102 aa)). Low complexity predominate over residues 860 to 872 (VAGSGSNNGNNNG). 3 disordered regions span residues 860 to 890 (VAGS…GSFI), 904 to 951 (NLSI…QQQL), and 977 to 1019 (SSYT…SKLK). Polar residues predominate over residues 879 to 890 (TTQQLNNSGSFI). The segment covering 977-986 (SSYTDSMSGS) has biased composition (low complexity). Over residues 987 to 1019 (PPDSNGQVFPQSPQLKKTLFQRTTSFSKGSKLK) the composition is skewed to polar residues.

As to quaternary structure, component of the Sca1 complex composed of at least gefA, gefH, scaA, phr, and the protein phosphatase 2A subunits pppA and pho2B. Interacts directly with gefH.

The protein resides in the cell membrane. Its function is as follows. Component of the Sca1 complex, a regulator of cell motility, chemotaxis and signal relay. The Sca1 complex is recruited to the plasma membrane in a chemoattractant- and F-actin-dependent manner and is enriched at the leading edge of chemotaxing cells where it regulates F-actin dynamics and signal relay by controlling the activation of rasC and the downstream target of rapamycin complex 2 (TORC2)-Akt/protein kinase B (PKB) pathway. The protein is Sca1 complex protein phr of Dictyostelium discoideum (Social amoeba).